We begin with the raw amino-acid sequence, 565 residues long: Proline--tRNA ligase (565 aa).

It belongs to the class-II aminoacyl-tRNA synthetase family. ProS type 1 subfamily. In terms of assembly, homodimer.

The protein localises to the cytoplasm. It carries out the reaction tRNA(Pro) + L-proline + ATP = L-prolyl-tRNA(Pro) + AMP + diphosphate. In terms of biological role, catalyzes the attachment of proline to tRNA(Pro) in a two-step reaction: proline is first activated by ATP to form Pro-AMP and then transferred to the acceptor end of tRNA(Pro). As ProRS can inadvertently accommodate and process non-cognate amino acids such as alanine and cysteine, to avoid such errors it has two additional distinct editing activities against alanine. One activity is designated as 'pretransfer' editing and involves the tRNA(Pro)-independent hydrolysis of activated Ala-AMP. The other activity is designated 'posttransfer' editing and involves deacylation of mischarged Ala-tRNA(Pro). The misacylated Cys-tRNA(Pro) is not edited by ProRS. The chain is Proline--tRNA ligase from Lactobacillus helveticus (strain DPC 4571).